The primary structure comprises 96 residues: MKIRPLHDRVLVKRNEAELKSAGGIVLTGSAAAKSTRGTITAVGNGRVLDNGQIKPLDVKVGDVVIFNEGYGAKTEKIDNEELLILNESDILAIVE.

It belongs to the GroES chaperonin family. Heptamer of 7 subunits arranged in a ring. Interacts with the chaperonin GroEL.

Its subcellular location is the cytoplasm. Its function is as follows. Together with the chaperonin GroEL, plays an essential role in assisting protein folding. The GroEL-GroES system forms a nano-cage that allows encapsulation of the non-native substrate proteins and provides a physical environment optimized to promote and accelerate protein folding. GroES binds to the apical surface of the GroEL ring, thereby capping the opening of the GroEL channel. This is Co-chaperonin GroES from Buchnera aphidicola subsp. Schizaphis graminum (strain Sg).